Consider the following 363-residue polypeptide: Dual-specificity RNA methyltransferase RlmN (363 aa).

Residue E102 is the Proton acceptor of the active site. The Radical SAM core domain maps to E108–E344. A disulfide bond links C115 and C350. Positions 122, 126, and 129 each coordinate [4Fe-4S] cluster. Residues G174–E175, S206, S228–H230, and N307 each bind S-adenosyl-L-methionine. The S-methylcysteine intermediate role is filled by C350.

It belongs to the radical SAM superfamily. RlmN family. The cofactor is [4Fe-4S] cluster.

The protein resides in the cytoplasm. It carries out the reaction adenosine(2503) in 23S rRNA + 2 reduced [2Fe-2S]-[ferredoxin] + 2 S-adenosyl-L-methionine = 2-methyladenosine(2503) in 23S rRNA + 5'-deoxyadenosine + L-methionine + 2 oxidized [2Fe-2S]-[ferredoxin] + S-adenosyl-L-homocysteine. The enzyme catalyses adenosine(37) in tRNA + 2 reduced [2Fe-2S]-[ferredoxin] + 2 S-adenosyl-L-methionine = 2-methyladenosine(37) in tRNA + 5'-deoxyadenosine + L-methionine + 2 oxidized [2Fe-2S]-[ferredoxin] + S-adenosyl-L-homocysteine. Specifically methylates position 2 of adenine 2503 in 23S rRNA and position 2 of adenine 37 in tRNAs. m2A2503 modification seems to play a crucial role in the proofreading step occurring at the peptidyl transferase center and thus would serve to optimize ribosomal fidelity. The polypeptide is Dual-specificity RNA methyltransferase RlmN (Buchnera aphidicola subsp. Acyrthosiphon pisum (strain APS) (Acyrthosiphon pisum symbiotic bacterium)).